The primary structure comprises 329 residues: Vacuolar protein sorting-associated protein 26B-like (329 aa).

The protein belongs to the VPS26 family.

Its subcellular location is the cytoplasm. It localises to the membrane. In terms of biological role, probable component of the retromer complex, a complex required to retrieve lysosomal enzyme receptors (IGF2R and M6PR) from endosomes to the trans-Golgi network. This is Vacuolar protein sorting-associated protein 26B-like (vps26bl) from Danio rerio (Zebrafish).